Reading from the N-terminus, the 818-residue chain is Protein LDB19 (818 aa).

The disordered stretch occupies residues 1–25 (MAFSRLTSTHQSNHNGYSNSNKKGQ). Residue threonine 93 is modified to Phosphothreonine. Positions 352–361 (QVKIKESEKS) are enriched in basic and acidic residues. Residues 352–374 (QVKIKESEKSKKPRSHIKRYGEL) form a disordered region. At serine 384 the chain carries Phosphoserine. The disordered stretch occupies residues 388 to 436 (MPSQRLPGEPGREQAPNSSGPASTGNVGLDDENPVNEDEEDQPGSEFIH). The span at 402–413 (APNSSGPASTGN) shows a compositional bias: polar residues. Residues 416–430 (LDDENPVNEDEEDQP) show a composition bias toward acidic residues. Lysine 486 is covalently cross-linked (Glycyl lysine isopeptide (Lys-Gly) (interchain with G-Cter in ubiquitin)). Disordered regions lie at residues 568–590 (QPIR…NVHN) and 607–644 (TPKV…NSNI). At threonine 619 the chain carries Phosphothreonine. The segment covering 620–629 (PVNSNKSNHS) has biased composition (polar residues). Serine 808 is modified (phosphoserine).

This sequence belongs to the LDB19 family.

It is found in the cytoplasm. It localises to the golgi apparatus. May be involved in protein-linked oligosaccharide phosphorylation since the deletion reduces the negative charge of the cell surface. Involved in the resistance to EDTA, cadmium chloride, cycloheximide, 6-dimethylaminopurine, methyl caffeate, beta-chloro-L-alanine, caffeine and cerulenin. The chain is Protein LDB19 (LDB19) from Saccharomyces cerevisiae (strain ATCC 204508 / S288c) (Baker's yeast).